Reading from the N-terminus, the 386-residue chain is Sphingosine 1-phosphate receptor 4 (386 aa).

Over Met-1 to Ser-56 the chain is Extracellular. Residues Asn-2 and Asn-32 are each glycosylated (N-linked (GlcNAc...) asparagine). A helical membrane pass occupies residues Val-57–Tyr-77. Topologically, residues Met-78–Cys-87 are cytoplasmic. Residues Leu-88–Leu-108 form a helical membrane-spanning segment. The Extracellular portion of the chain corresponds to Ser-109 to His-120. Residues Trp-121 to Phe-141 traverse the membrane as a helical segment. Residues Thr-142 to Arg-163 are Cytoplasmic-facing. Residues Val-164 to Leu-184 form a helical membrane-spanning segment. At Gly-185–Leu-208 the chain is on the extracellular side. Residues Phe-209–Phe-229 traverse the membrane as a helical segment. Topologically, residues Arg-230 to Thr-254 are cytoplasmic. Residues Val-255–Ala-275 traverse the membrane as a helical segment. Over Asp-276–Gly-290 the chain is Extracellular. Residues Met-291–Phe-311 traverse the membrane as a helical segment. Residues Arg-312–Thr-386 are Cytoplasmic-facing. The S-palmitoyl cysteine moiety is linked to residue Cys-325.

This sequence belongs to the G-protein coupled receptor 1 family. Specifically expressed in fetal and adult lymphoid and hematopoietic tissue. Expressed in lung, spleen, thymus and lymph node but absent in other non-lymphatic tissue. Coexpressed with GNA15 at the same relative levels in all tissues examined, with the highest levels in adult spleen and lung.

It is found in the cell membrane. In terms of biological role, receptor for the lysosphingolipid sphingosine 1-phosphate (S1P). S1P is a bioactive lysophospholipid that elicits diverse physiological effect on most types of cells and tissues. May be involved in cell migration processes that are specific for lymphocytes. The sequence is that of Sphingosine 1-phosphate receptor 4 (S1pr4) from Mus musculus (Mouse).